We begin with the raw amino-acid sequence, 577 residues long: Arginine--tRNA ligase (577 aa).

The short motif at 122-132 is the 'HIGH' region element; sequence PNVAKEMHVGH.

Belongs to the class-I aminoacyl-tRNA synthetase family. Monomer.

Its subcellular location is the cytoplasm. It carries out the reaction tRNA(Arg) + L-arginine + ATP = L-arginyl-tRNA(Arg) + AMP + diphosphate. The chain is Arginine--tRNA ligase from Shigella flexneri.